The primary structure comprises 116 residues: MNFTFLVVVLLTALAFVGVVIALSRAISPRSYNVQKFEAYECGIPTRGKSWMQFRVGYYLFAILFLMFDVETAFLFPWAVVMHDMGPQGLVSILFFFIILVLGLAYAWRKGALEWK.

The next 3 membrane-spanning stretches (helical) occupy residues 3–23 (FTFL…VIAL), 61–81 (FAIL…WAVV), and 88–108 (QGLV…AYAW).

Belongs to the complex I subunit 3 family. NDH-1 is composed of 14 different subunits. Subunits NuoA, H, J, K, L, M, N constitute the membrane sector of the complex.

The protein resides in the cell inner membrane. The catalysed reaction is a quinone + NADH + 5 H(+)(in) = a quinol + NAD(+) + 4 H(+)(out). Functionally, NDH-1 shuttles electrons from NADH, via FMN and iron-sulfur (Fe-S) centers, to quinones in the respiratory chain. The immediate electron acceptor for the enzyme in this species is believed to be a menaquinone. Couples the redox reaction to proton translocation (for every two electrons transferred, four hydrogen ions are translocated across the cytoplasmic membrane), and thus conserves the redox energy in a proton gradient. In Bacteroides thetaiotaomicron (strain ATCC 29148 / DSM 2079 / JCM 5827 / CCUG 10774 / NCTC 10582 / VPI-5482 / E50), this protein is NADH-quinone oxidoreductase subunit A.